The sequence spans 160 residues: Xanthine-guanine phosphoribosyltransferase (160 aa).

5-phospho-alpha-D-ribose 1-diphosphate is bound by residues 41-42 and 93-101; these read RG and DDLVDTGRT. Residue Asp94 coordinates Mg(2+). Guanine is bound by residues Asp97 and Ile140. Xanthine is bound by residues Asp97 and Ile140. GMP contacts are provided by residues 97 to 101 and 139 to 140; these read DTGRT and WI.

This sequence belongs to the purine/pyrimidine phosphoribosyltransferase family. XGPT subfamily. As to quaternary structure, homotetramer. The cofactor is Mg(2+).

The protein localises to the cell inner membrane. It carries out the reaction GMP + diphosphate = guanine + 5-phospho-alpha-D-ribose 1-diphosphate. The enzyme catalyses XMP + diphosphate = xanthine + 5-phospho-alpha-D-ribose 1-diphosphate. The catalysed reaction is IMP + diphosphate = hypoxanthine + 5-phospho-alpha-D-ribose 1-diphosphate. It participates in purine metabolism; GMP biosynthesis via salvage pathway; GMP from guanine: step 1/1. Its pathway is purine metabolism; XMP biosynthesis via salvage pathway; XMP from xanthine: step 1/1. Functionally, purine salvage pathway enzyme that catalyzes the transfer of the ribosyl-5-phosphate group from 5-phospho-alpha-D-ribose 1-diphosphate (PRPP) to the N9 position of the 6-oxopurines guanine and xanthine to form the corresponding ribonucleotides GMP (guanosine 5'-monophosphate) and XMP (xanthosine 5'-monophosphate), with the release of PPi. To a lesser extent, also acts on hypoxanthine. This is Xanthine-guanine phosphoribosyltransferase from Desulfotalea psychrophila (strain LSv54 / DSM 12343).